Reading from the N-terminus, the 356-residue chain is 1,2-phenylacetyl-CoA epoxidase, subunit E (356 aa).

The FAD-binding FR-type domain occupies 2–106 (TTFHSLTVAK…MVPQGHFGYQ (105 aa)). Residues 112–228 (QGRYLAIAAG…AAMMDDAETA (117 aa)) are oxidoreductase. The 2Fe-2S ferredoxin-type domain occupies 262–354 (QKVTVRQDGR…DVVVDFDAKG (93 aa)). [2Fe-2S] cluster contacts are provided by Cys-299, Cys-304, Cys-307, and Cys-337.

The protein in the N-terminal section; belongs to the FAD-binding oxidoreductase type 6 family. The cofactor is [2Fe-2S] cluster. It depends on FAD as a cofactor.

The protein operates within aromatic compound metabolism; phenylacetate degradation. Its function is as follows. Component of 1,2-phenylacetyl-CoA epoxidase multicomponent enzyme system which catalyzes the reduction of phenylacetyl-CoA (PA-CoA) to form 1,2-epoxyphenylacetyl-CoA. The subunit E is a reductase with a preference for NADPH and FAD, capable of reducing cytochrome c. This is 1,2-phenylacetyl-CoA epoxidase, subunit E (paaE) from Escherichia coli (strain K12).